Here is a 307-residue protein sequence, read N- to C-terminus: Protein pxr1 (307 aa).

Positions 1 to 11 (MGLAAPRKKTK) are enriched in basic residues. 2 disordered regions span residues 1-25 (MGLA…SRST) and 144-234 (NATA…SDCD). A compositionally biased stretch (polar residues) spans 15 to 25 (DPNNTSWSRST). The G-patch domain occupies 25 to 79 (TDGFGHRILKAQGWTPGGFLGARNATHSDLFTTASASHIRVVLKDDTLGLGARPK). Basic and acidic residues-rich tracts occupy residues 154-168 (LRVD…HESE) and 206-221 (GKEL…EKKQ).

Belongs to the PINX1 family.

It localises to the nucleus. Its subcellular location is the nucleolus. Functionally, involved in rRNA-processing at A0, A1 and A2 sites and negatively regulates telomerase. This is Protein pxr1 (pxr1) from Neosartorya fischeri (strain ATCC 1020 / DSM 3700 / CBS 544.65 / FGSC A1164 / JCM 1740 / NRRL 181 / WB 181) (Aspergillus fischerianus).